A 79-amino-acid polypeptide reads, in one-letter code: Cell division topological specificity factor (79 aa).

This sequence belongs to the MinE family.

Its function is as follows. Prevents the cell division inhibition by proteins MinC and MinD at internal division sites while permitting inhibition at polar sites. This ensures cell division at the proper site by restricting the formation of a division septum at the midpoint of the long axis of the cell. The chain is Cell division topological specificity factor from Nitratiruptor sp. (strain SB155-2).